A 490-amino-acid chain; its full sequence is Doublesex- and mab-3-related transcription factor A1 (490 aa).

The span at 1–13 (MERLPHGRRDRSG) shows a compositional bias: basic and acidic residues. A disordered region spans residues 1–31 (MERLPHGRRDRSGGCRPHLAPGRAAAPASAA). Over residues 20–31 (APGRAAAPASAA) the composition is skewed to low complexity. The segment at residues 86–133 (CARCRNHGVVSALKGHKRFCRWRDCACAKCTLIAERQRVMAAQVALRR) is a DNA-binding region (DM). Disordered regions lie at residues 152–171 (GSSGSGAQASGGSGRTESPQ) and 207–289 (DRKQ…DLES). The span at 207–216 (DRKQEPKQRN) shows a compositional bias: basic and acidic residues. 2 stretches are compositionally biased toward polar residues: residues 217–242 (CESCQSRQEEPVSNTHHHSLGSSKGN) and 269–289 (PTDQSGGEDSPRSFSSSDLES). The 36-residue stretch at 314-349 (RDPLGILTRIFPGYKHSRLEGILQFCKGDVVQAIEQ) folds into the DMA domain.

This sequence belongs to the DMRT family. As to expression, widely expressed, with highest levels in ovary, testis, epididymis, preputial gland, vomeronasal organ, liver, salivary glands and heart. Also expressed throughout the brain with highest levels in the olfactory bulbs and medulla. Detected at similar levels in gonads of both sexes.

The protein resides in the nucleus. The sequence is that of Doublesex- and mab-3-related transcription factor A1 (Dmrta1) from Mus musculus (Mouse).